The primary structure comprises 67 residues: Small ribosomal subunit protein eS27 (67 aa).

Residues C22, C25, C41, and C44 each contribute to the Zn(2+) site. A C4-type zinc finger spans residues 22–44 (CPDCGNEQVVFSHAAMVVRCLVC).

The protein belongs to the eukaryotic ribosomal protein eS27 family. In terms of assembly, part of the 30S ribosomal subunit. Requires Zn(2+) as cofactor.

This Pyrobaculum islandicum (strain DSM 4184 / JCM 9189 / GEO3) protein is Small ribosomal subunit protein eS27.